A 726-amino-acid polypeptide reads, in one-letter code: Probable dipeptidyl-peptidase 5 (726 aa).

The first 19 residues, 1 to 19, serve as a signal peptide directing secretion; it reads MAAAKWLIASLAFASSGLA. Asn96 and Asn252 each carry an N-linked (GlcNAc...) asparagine glycan. The segment at 269–291 is disordered; sequence AEPINKRNGPRTPQGIEGASSSP. N-linked (GlcNAc...) asparagine glycosylation is present at Asn485. Ser558 (charge relay system) is an active-site residue. N-linked (GlcNAc...) asparagine glycosylation occurs at Asn605. Active-site charge relay system residues include Asp641 and His673. Residue Asn699 is glycosylated (N-linked (GlcNAc...) asparagine).

This sequence belongs to the peptidase S9C family.

It is found in the secreted. In terms of biological role, extracellular dipeptidyl-peptidase which removes N-terminal dipeptides sequentially from polypeptides having unsubstituted N-termini. Contributes to pathogenicity. This is Probable dipeptidyl-peptidase 5 (DPP5) from Arthroderma benhamiae (strain ATCC MYA-4681 / CBS 112371) (Trichophyton mentagrophytes).